The sequence spans 1025 residues: DNA ligase 4 (1025 aa).

Residues 1 to 36 (MMQPTPAPSSAPGSPQRTQAEPEMETPSYPQPPQNV) are disordered. ATP-binding residues include Glu289, Lys291, Leu292, Arg296, Glu349, Phe387, Glu447, Lys452, Lys469, and Lys471. The active-site N6-AMP-lysine intermediate is Lys291. Residue Glu349 participates in Mg(2+) binding. Glu447 is a binding site for Mg(2+). The 97-residue stretch at 667–763 (VKTDIFNGMK…EPAPFKKKYF (97 aa)) folds into the BRCT 1 domain. Residues 773-904 (ADEYNEDDGE…TTPDVDGDVK (132 aa)) are disordered. Acidic residues-rich tracts occupy residues 775–785 (EYNEDDGEEEG) and 806–816 (SETEDEDEEQA). The segment covering 817–838 (PEIKEEQDGELHEWLKVDDRKS) has biased composition (basic and acidic residues). Over residues 845 to 870 (DEEDSVTEDDSDNADVADEEEPDLDD) the composition is skewed to acidic residues. Residues 891–904 (RHRETTPDVDGDVK) are compositionally biased toward basic and acidic residues. In terms of domain architecture, BRCT 2 spans 915 to 1025 (DPDVIFKHLC…TLLDEEGESF (111 aa)).

Belongs to the ATP-dependent DNA ligase family. Mg(2+) is required as a cofactor.

It is found in the nucleus. It catalyses the reaction ATP + (deoxyribonucleotide)n-3'-hydroxyl + 5'-phospho-(deoxyribonucleotide)m = (deoxyribonucleotide)n+m + AMP + diphosphate.. In terms of biological role, DNA ligase involved in DNA non-homologous end joining (NHEJ); required for double-strand break (DSB) repair. The sequence is that of DNA ligase 4 (LIG4) from Coprinopsis cinerea (strain Okayama-7 / 130 / ATCC MYA-4618 / FGSC 9003) (Inky cap fungus).